Here is a 118-residue protein sequence, read N- to C-terminus: Ribonuclease P protein component (118 aa).

Belongs to the RnpA family. As to quaternary structure, consists of a catalytic RNA component (M1 or rnpB) and a protein subunit.

It carries out the reaction Endonucleolytic cleavage of RNA, removing 5'-extranucleotides from tRNA precursor.. Its function is as follows. RNaseP catalyzes the removal of the 5'-leader sequence from pre-tRNA to produce the mature 5'-terminus. It can also cleave other RNA substrates such as 4.5S RNA. The protein component plays an auxiliary but essential role in vivo by binding to the 5'-leader sequence and broadening the substrate specificity of the ribozyme. This is Ribonuclease P protein component from Desulfatibacillum aliphaticivorans.